The chain runs to 175 residues: MAATATACPAPPPPRSLYRGVALAAPGRRRAGYGASSSAARRWPGCRRRWAAHRIRTVSCAYSPRGAKTITACSWNEYVICSDIPVLIEFWASWCGPCRMVHRIVDEIAQEYAGRIKCYKLDTDDYPQVATSYSIERIPTVLLFKDGEKTHSITGTLPKAVYVRAIEKSISDSEQ.

Residues 1–59 (MAATATACPAPPPPRSLYRGVALAAPGRRRAGYGASSSAARRWPGCRRRWAAHRIRTVS) constitute a chloroplast transit peptide. The 111-residue stretch at 61–171 (AYSPRGAKTI…YVRAIEKSIS (111 aa)) folds into the Thioredoxin domain. Residues Cys95 and Cys98 each act as nucleophile in the active site. Cys95 and Cys98 are oxidised to a cystine.

It belongs to the thioredoxin family. Plant M-type subfamily.

It is found in the plastid. The protein localises to the chloroplast. Functionally, probable thiol-disulfide oxidoreductase that may be involved in the redox regulation of chloroplastic enzymes. The sequence is that of Thioredoxin M3, chloroplastic from Oryza sativa subsp. japonica (Rice).